The following is a 344-amino-acid chain: MSNTQLSYKDAGVDIHAGNELVERIKGDVKRTRRSEVMGGLGGFGALCALPTKYKEPILVSGTDGVGTKLRLAIDLKKHDTIGQDLVAMCVNDLIVQGAEPLFFLDYYATGKLDVDVAASVIKGIADGCEMSGCALVGGETAEMPGMYHEGDYDLAGFCVGVVEKSEIIDGTAVKTGDTLIALGSSGAHSNGYSLIRKVLEVSGANPTDLLEGKPLSEHFLAPTKIYVKSILQLIKQTEVHAIAHLTGGGFWENIPRVLPDNTKAVIDESSWQWPAIFNWLQEKGNISRYEMYRTFNCGVGMVIALPEKEVETALALLEQSGEKAWVIGKIEHLGEGEAQVEIQ.

This sequence belongs to the AIR synthase family.

The protein localises to the cytoplasm. The enzyme catalyses 2-formamido-N(1)-(5-O-phospho-beta-D-ribosyl)acetamidine + ATP = 5-amino-1-(5-phospho-beta-D-ribosyl)imidazole + ADP + phosphate + H(+). It functions in the pathway purine metabolism; IMP biosynthesis via de novo pathway; 5-amino-1-(5-phospho-D-ribosyl)imidazole from N(2)-formyl-N(1)-(5-phospho-D-ribosyl)glycinamide: step 2/2. This chain is Phosphoribosylformylglycinamidine cyclo-ligase, found in Haemophilus influenzae (strain PittGG).